Here is a 564-residue protein sequence, read N- to C-terminus: uncharacterized protein (564 aa).

Residues 1 to 21 form the signal peptide; the sequence is MRRIGAITALSLPVLLSLLYS. Cys22 carries N-palmitoyl cysteine lipidation. Cys22 carries S-diacylglycerol cysteine lipidation.

The protein resides in the cell membrane. This is an uncharacterized protein from Aquifex aeolicus (strain VF5).